The sequence spans 323 residues: Methenyltetrahydromethanopterin cyclohydrolase (323 aa).

This sequence belongs to the MCH family.

It localises to the cytoplasm. The catalysed reaction is 5,10-methenyl-5,6,7,8-tetrahydromethanopterin + H2O = N(5)-formyl-5,6,7,8-tetrahydromethanopterin + H(+). It functions in the pathway one-carbon metabolism; methanogenesis from CO(2); 5,10-methenyl-5,6,7,8-tetrahydromethanopterin from CO(2): step 3/3. In terms of biological role, catalyzes the reversible interconversion of 5-formyl-H(4)MPT to methenyl-H(4)MPT(+). This chain is Methenyltetrahydromethanopterin cyclohydrolase, found in Methanococcus maripaludis (strain C7 / ATCC BAA-1331).